We begin with the raw amino-acid sequence, 284 residues long: Acetylglutamate kinase (284 aa).

Substrate is bound by residues 66–67 (GG), arginine 88, and asparagine 179.

This sequence belongs to the acetylglutamate kinase family. ArgB subfamily.

The protein localises to the cytoplasm. The catalysed reaction is N-acetyl-L-glutamate + ATP = N-acetyl-L-glutamyl 5-phosphate + ADP. It functions in the pathway amino-acid biosynthesis; L-arginine biosynthesis; N(2)-acetyl-L-ornithine from L-glutamate: step 2/4. In terms of biological role, catalyzes the ATP-dependent phosphorylation of N-acetyl-L-glutamate. The sequence is that of Acetylglutamate kinase from Actinobacillus pleuropneumoniae serotype 3 (strain JL03).